The following is a 207-amino-acid chain: HTH-type transcriptional regulator BetI 2 (207 aa).

In terms of domain architecture, HTH tetR-type spans 8 to 68 (PIRRQQLIKA…ATMRQILTDL (61 aa)). Positions 31–50 (TVMRIARHAGVSAGIISHYF) form a DNA-binding region, H-T-H motif.

The protein operates within amine and polyamine biosynthesis; betaine biosynthesis via choline pathway [regulation]. In terms of biological role, repressor involved in the biosynthesis of the osmoprotectant glycine betaine. It represses transcription of the choline transporter BetT and the genes of BetAB involved in the synthesis of glycine betaine. The protein is HTH-type transcriptional regulator BetI 2 of Chromohalobacter salexigens (strain ATCC BAA-138 / DSM 3043 / CIP 106854 / NCIMB 13768 / 1H11).